The following is a 94-amino-acid chain: Small ribosomal subunit protein uS19 (94 aa).

Belongs to the universal ribosomal protein uS19 family.

Protein S19 forms a complex with S13 that binds strongly to the 16S ribosomal RNA. The protein is Small ribosomal subunit protein uS19 of Moorella thermoacetica (strain ATCC 39073 / JCM 9320).